A 161-amino-acid polypeptide reads, in one-letter code: Lipoprotein signal peptidase (161 aa).

2 helical membrane passes run 64-84 and 92-114; these read YRVPFFIITTSVAVVFLAWFY and VLGRCAVSLVLGGAIGNLIDRVR. Residues Asp-120 and Asp-138 contribute to the active site. The helical transmembrane segment at 131 to 151 threads the bilayer; it reads WPAFNVADSAICVGVGMLLLA.

This sequence belongs to the peptidase A8 family.

It localises to the cell inner membrane. The enzyme catalyses Release of signal peptides from bacterial membrane prolipoproteins. Hydrolyzes -Xaa-Yaa-Zaa-|-(S,diacylglyceryl)Cys-, in which Xaa is hydrophobic (preferably Leu), and Yaa (Ala or Ser) and Zaa (Gly or Ala) have small, neutral side chains.. Its pathway is protein modification; lipoprotein biosynthesis (signal peptide cleavage). In terms of biological role, this protein specifically catalyzes the removal of signal peptides from prolipoproteins. This chain is Lipoprotein signal peptidase, found in Syntrophotalea carbinolica (strain DSM 2380 / NBRC 103641 / GraBd1) (Pelobacter carbinolicus).